A 347-amino-acid chain; its full sequence is E3 ubiquitin-protein ligase RNF146-B (347 aa).

An RING-type zinc finger spans residues 37 to 75 (CAICLQTCVHPVSLPCKHVFCYLCVKGASWLGKRCALCR). Residues Lys-85, Lys-95, Lys-131, and Lys-176 each participate in a glycyl lysine isopeptide (Lys-Gly) (interchain with G-Cter in ubiquitin) cross-link. One can recognise a WWE domain in the interval 92 to 168 (EELKAASRGN…EHGRRRKIKR (77 aa)). 2 disordered regions span residues 196-241 (SSAD…GTSL) and 257-347 (ERSH…VTEV). The segment covering 203–217 (SVPAQSGASVQSSSV) has biased composition (low complexity). The span at 282–296 (SIEETESDASSDSED) shows a compositional bias: acidic residues. 2 positions are modified to phosphoserine: Ser-288 and Ser-292. A compositionally biased stretch (polar residues) spans 304-322 (HSLTQQRLLVPNPSQTVSD).

Interacts with poly-ADP-ribosylated AXIN1, AXIN2, BLZF1 and CASC3. Post-translationally, ubiquitinated; autoubiquitinated. Autoubiquitination is enhanced upon poly(ADP-ribose)-binding.

Its subcellular location is the cytoplasm. The protein localises to the cytosol. The catalysed reaction is S-ubiquitinyl-[E2 ubiquitin-conjugating enzyme]-L-cysteine + [acceptor protein]-L-lysine = [E2 ubiquitin-conjugating enzyme]-L-cysteine + N(6)-ubiquitinyl-[acceptor protein]-L-lysine.. The protein operates within protein modification; protein ubiquitination. In terms of biological role, E3 ubiquitin-protein ligase that specifically binds poly-ADP-ribosylated proteins and mediates their ubiquitination and subsequent degradation. Acts as an activator of the Wnt signaling pathway by mediating the ubiquitination of poly-ADP-ribosylated AXIN1 and AXIN2, 2 key components of the beta-catenin destruction complex. Acts in cooperation with tankyrase proteins (TNKS and TNKS2), which mediate poly-ADP-ribosylation of target proteins AXIN1, AXIN2, BLZF1, CASC3, TNKS and TNKS2. Recognizes and binds tankyrase-dependent poly-ADP-ribosylated proteins via its WWE domain and mediates their ubiquitination. The protein is E3 ubiquitin-protein ligase RNF146-B (RNF146B) of Bos taurus (Bovine).